We begin with the raw amino-acid sequence, 348 residues long: Anthranilate phosphoribosyltransferase (348 aa).

5-phospho-alpha-D-ribose 1-diphosphate contacts are provided by residues glycine 81, 84-85, threonine 89, 91-94, 109-117, and serine 121; these read GD, NIST, and KHGNRAMSS. Glycine 81 lines the anthranilate pocket. Serine 93 is a Mg(2+) binding site. Anthranilate is bound at residue asparagine 112. Arginine 167 lines the anthranilate pocket. Aspartate 226 and glutamate 227 together coordinate Mg(2+).

Belongs to the anthranilate phosphoribosyltransferase family. As to quaternary structure, homodimer. Requires Mg(2+) as cofactor.

It carries out the reaction N-(5-phospho-beta-D-ribosyl)anthranilate + diphosphate = 5-phospho-alpha-D-ribose 1-diphosphate + anthranilate. Its pathway is amino-acid biosynthesis; L-tryptophan biosynthesis; L-tryptophan from chorismate: step 2/5. Its function is as follows. Catalyzes the transfer of the phosphoribosyl group of 5-phosphorylribose-1-pyrophosphate (PRPP) to anthranilate to yield N-(5'-phosphoribosyl)-anthranilate (PRA). This Thermomicrobium roseum (strain ATCC 27502 / DSM 5159 / P-2) protein is Anthranilate phosphoribosyltransferase.